A 341-amino-acid polypeptide reads, in one-letter code: ATPase GET3 (341 aa).

34–41 (KGGVGKTT) is an ATP binding site. Aspartate 63 is an active-site residue. 2 residues coordinate ATP: glutamate 245 and asparagine 272. Residues cysteine 283 and cysteine 286 each contribute to the Zn(2+) site.

The protein belongs to the arsA ATPase family. In terms of assembly, homodimer.

Its subcellular location is the cytoplasm. The protein resides in the endoplasmic reticulum. In terms of biological role, ATPase required for the post-translational delivery of tail-anchored (TA) proteins to the endoplasmic reticulum. Recognizes and selectively binds the transmembrane domain of TA proteins in the cytosol. This complex then targets to the endoplasmic reticulum by membrane-bound receptors, where the tail-anchored protein is released for insertion. This process is regulated by ATP binding and hydrolysis. ATP binding drives the homodimer towards the closed dimer state, facilitating recognition of newly synthesized TA membrane proteins. ATP hydrolysis is required for insertion. Subsequently, the homodimer reverts towards the open dimer state, lowering its affinity for the membrane-bound receptor, and returning it to the cytosol to initiate a new round of targeting. The chain is ATPase GET3 from Ajellomyces capsulatus (strain G186AR / H82 / ATCC MYA-2454 / RMSCC 2432) (Darling's disease fungus).